The chain runs to 468 residues: Mannan endo-1,4-beta-mannosidase 3 (468 aa).

A signal peptide spans 1-23 (MTVRPRPAAAAIIIAAVFGAAAA). W86 is a binding site for substrate. The N-linked (GlcNAc...) asparagine glycan is linked to N152. Position 201 (N201) interacts with substrate. E202 (proton donor) is an active-site residue. Y281 serves as a coordination point for substrate. Residue N300 is glycosylated (N-linked (GlcNAc...) asparagine). The active-site Nucleophile is the E321. N333 carries N-linked (GlcNAc...) asparagine glycosylation. The substrate site is built by W364 and D371. A disordered region spans residues 415 to 436 (LRRRRRRPASSHRKTRLGSGGD). Residues 416–430 (RRRRRRPASSHRKTR) are compositionally biased toward basic residues.

This sequence belongs to the glycosyl hydrolase 5 (cellulase A) family. Expressed in seeds.

It is found in the secreted. The catalysed reaction is Random hydrolysis of (1-&gt;4)-beta-D-mannosidic linkages in mannans, galactomannans and glucomannans.. The protein is Mannan endo-1,4-beta-mannosidase 3 (MAN3) of Oryza sativa subsp. japonica (Rice).